A 140-amino-acid polypeptide reads, in one-letter code: MAVERTFSMIKPDATRRNLTGAITKMLEDAGLRVIASKRVWMSQREAEKFYAVHKERAFFSELVELMSSGPTIVQVLEGENAIAKNREVMGATNPEDAQEGTIRKVHALSIGENSVHGSDSAETAKTEIAFWFSEVEIVG.

Positions 11, 59, 87, 93, 104, and 114 each coordinate ATP. Histidine 117 (pros-phosphohistidine intermediate) is an active-site residue.

The protein belongs to the NDK family. Homotetramer. Mg(2+) serves as cofactor.

The protein resides in the cytoplasm. The enzyme catalyses a 2'-deoxyribonucleoside 5'-diphosphate + ATP = a 2'-deoxyribonucleoside 5'-triphosphate + ADP. It catalyses the reaction a ribonucleoside 5'-diphosphate + ATP = a ribonucleoside 5'-triphosphate + ADP. Functionally, major role in the synthesis of nucleoside triphosphates other than ATP. The ATP gamma phosphate is transferred to the NDP beta phosphate via a ping-pong mechanism, using a phosphorylated active-site intermediate. The sequence is that of Nucleoside diphosphate kinase from Bartonella henselae (strain ATCC 49882 / DSM 28221 / CCUG 30454 / Houston 1) (Rochalimaea henselae).